The sequence spans 309 residues: G-protein coupled receptor 35 (309 aa).

The Extracellular segment spans residues 1 to 24 (MNGTYNTCGSSDLTWPPAIKLGFY). The N-linked (GlcNAc...) asparagine glycan is linked to Asn2. The chain crosses the membrane as a helical span at residues 25–45 (AYLGVLLVLGLLLNSLALWVF). At 46-56 (CCRMQQWTETR) the chain is on the cytoplasmic side. The helical transmembrane segment at 57–77 (IYMTNLAVADLCLLCTLPFVL) threads the bilayer. At 78–90 (HSLRDTSDTPLCQ) the chain is on the extracellular side. Cys89 and Cys162 are disulfide-bonded. Residues 91–112 (LSQGIYLTNRYMSISLVTAIAV) form a helical membrane-spanning segment. At 113–135 (DRYVAVRHPLRARGLRSPRQAAA) the chain is on the cytoplasmic side. The chain crosses the membrane as a helical span at residues 136 to 156 (VCAVLWVLVIGSLVARWLLGI). The Extracellular segment spans residues 157–174 (QEGGFCFRSTRHNFNSMA). Residues 175–195 (FPLLGFYLPLAVVVFCSLKVV) form a helical membrane-spanning segment. Topologically, residues 196–218 (TALAQRPPTDVGQAEATRKAARM) are cytoplasmic. Residues 219 to 239 (VWANLLVFVVCFLPLHVGLTV) form a helical membrane-spanning segment. Over 240 to 258 (RLAVGWNACALLETIRRAL) the chain is Extracellular. The helical transmembrane segment at 259–279 (YITSKLSDANCCLDAICYYYM) threads the bilayer. Residues 280-309 (AKEFQEASALAVAPSAKAHKSQDSLCVTLA) are Cytoplasmic-facing. A phosphoserine mark is found at Ser287 and Ser294. 2 positions are modified to phosphoserine; by GRK5 and GRK6: Ser300 and Ser303. Thr307 bears the Phosphothreonine mark.

This sequence belongs to the G-protein coupled receptor 1 family. Interacts with GNA13. Interacts with ARRB2. Multiply phosphorylated in clusters of serines and threonines in the C-terminal tail. Phosphorylation of Ser-300 and Ser-303 is mediated by GRK5 and/or GRK6. Predominantly expressed in immune and gastrointestinal tissues.

The protein localises to the cell membrane. Its function is as follows. G-protein coupled receptor that binds to several ligands including the tryptophan metabolite kynurenic acid (KYNA), lysophosphatidic acid (LPA) or 5-hydroxyindoleacetic acid (5-HIAA) with high affinity, leading to rapid and transient activation of numerous intracellular signaling pathways. Plays a role in neutrophil recruitment to sites of inflammation and bacterial clearance through the major serotonin metabolite 5-HIAA that acts as a physiological ligand. Stimulates lipid metabolism, thermogenic, and anti-inflammatory gene expression in adipose tissue once activated by kynurenic acid. In macrophages, activation by lysophosphatidic acid promotes GPR35-induced signaling with a distinct transcriptional profile characterized by TNF production associated with ERK and NF-kappa-B activation. In turn, induces chemotaxis of macrophages. The protein is G-protein coupled receptor 35 (GPR35) of Homo sapiens (Human).